A 405-amino-acid chain; its full sequence is K(+)/H(+) antiporter subunit KhtU (405 aa).

A run of 12 helical transmembrane segments spans residues 3-23 (HLVF…VIAN), 29-49 (IIPF…KMGI), 60-80 (IIEF…GLEF), 85-105 (LIKS…INFS), 108-128 (LLYG…AGVI), 153-173 (LILG…SVVS), 183-203 (VGSA…FFIA), 222-242 (VFII…ETIH), 268-288 (LVVP…GLSI), 297-317 (VWLA…AGMV), 332-352 (IGLT…LGIA), and 357-377 (ATLK…GPLV).

It belongs to the monovalent cation:proton antiporter 2 (CPA2) transporter (TC 2.A.37) family. As to quaternary structure, the transporter is composed of the integral membrane protein KhtU and the regulatory protein KhtT.

It is found in the cell membrane. With respect to regulation, potassium antiport activity requires the presence of KhtT. Activity is also modulated by KhtS. Has higher activity at alkaline pH. Its function is as follows. Potassium/proton antiporter that mediates the efflux of potassium ions from the cell. Can also mediate rubidium/proton antiport, but has no permeability for sodium or lithium ions. In the absence of KhtT, does not have antiport activity, but can catalyze potassium efflux. Involved in protection of the cell from methylglyoxal, a toxic by-product of glycolysis, via activation by S-lactoyl-BSH of the antiporter activity, leading to cytoplasmic acidification and methylglyoxal resistance. This Bacillus subtilis (strain 168) protein is K(+)/H(+) antiporter subunit KhtU.